A 255-amino-acid polypeptide reads, in one-letter code: Hydroxyethylthiazole kinase (255 aa).

Residue Met-38 coordinates substrate. 2 residues coordinate ATP: Arg-114 and Thr-160. Position 187 (Gly-187) interacts with substrate.

Belongs to the Thz kinase family. Requires Mg(2+) as cofactor.

The catalysed reaction is 5-(2-hydroxyethyl)-4-methylthiazole + ATP = 4-methyl-5-(2-phosphooxyethyl)-thiazole + ADP + H(+). The protein operates within cofactor biosynthesis; thiamine diphosphate biosynthesis; 4-methyl-5-(2-phosphoethyl)-thiazole from 5-(2-hydroxyethyl)-4-methylthiazole: step 1/1. Catalyzes the phosphorylation of the hydroxyl group of 4-methyl-5-beta-hydroxyethylthiazole (THZ). This Lysinibacillus sphaericus (strain C3-41) protein is Hydroxyethylthiazole kinase.